A 195-amino-acid chain; its full sequence is Dephospho-CoA kinase (195 aa).

One can recognise a DPCK domain in the interval 3-195 (IVGLTGGIGS…IALHENYLNH (193 aa)). 11 to 16 (GSGKSA) contributes to the ATP binding site.

It belongs to the CoaE family.

The protein resides in the cytoplasm. The enzyme catalyses 3'-dephospho-CoA + ATP = ADP + CoA + H(+). Its pathway is cofactor biosynthesis; coenzyme A biosynthesis; CoA from (R)-pantothenate: step 5/5. Functionally, catalyzes the phosphorylation of the 3'-hydroxyl group of dephosphocoenzyme A to form coenzyme A. This is Dephospho-CoA kinase from Acinetobacter baylyi (strain ATCC 33305 / BD413 / ADP1).